The chain runs to 296 residues: Acetylglutamate kinase (296 aa).

Substrate contacts are provided by residues 69-70 (GG), arginine 91, and asparagine 193.

The protein belongs to the acetylglutamate kinase family. ArgB subfamily.

The protein resides in the cytoplasm. The enzyme catalyses N-acetyl-L-glutamate + ATP = N-acetyl-L-glutamyl 5-phosphate + ADP. Its pathway is amino-acid biosynthesis; L-arginine biosynthesis; N(2)-acetyl-L-ornithine from L-glutamate: step 2/4. Functionally, catalyzes the ATP-dependent phosphorylation of N-acetyl-L-glutamate. This chain is Acetylglutamate kinase, found in Paracidovorax citrulli (strain AAC00-1) (Acidovorax citrulli).